The chain runs to 479 residues: Cardiolipin synthase A (479 aa).

The next 2 helical transmembrane spans lie at 8 to 28 (FFGYLIGLIHLLGIIAALHAV) and 38 to 58 (IAWALSLLFIPYFTLIPYLIF). 2 PLD phosphodiesterase domains span residues 218 to 245 (VNFRNHRKIVVVDGLRGFLGGHNVGDEY) and 392 to 419 (QPGFLHQKVVLVDDEVSAIGSANLDNRS). Active-site residues include His-223, Lys-225, Asp-230, His-397, Lys-399, and Asp-404.

Belongs to the phospholipase D family. Cardiolipin synthase subfamily. ClsA sub-subfamily.

It localises to the cell inner membrane. The catalysed reaction is 2 a 1,2-diacyl-sn-glycero-3-phospho-(1'-sn-glycerol) = a cardiolipin + glycerol. Functionally, catalyzes the reversible phosphatidyl group transfer from one phosphatidylglycerol molecule to another to form cardiolipin (CL) (diphosphatidylglycerol) and glycerol. The protein is Cardiolipin synthase A of Pseudomonas entomophila (strain L48).